The chain runs to 300 residues: Bis(5'-nucleosyl)-tetraphosphatase, symmetrical (300 aa).

The protein belongs to the Ap4A hydrolase family.

The catalysed reaction is P(1),P(4)-bis(5'-adenosyl) tetraphosphate + H2O = 2 ADP + 2 H(+). In terms of biological role, hydrolyzes diadenosine 5',5'''-P1,P4-tetraphosphate to yield ADP. This Pseudomonas syringae pv. tomato (strain ATCC BAA-871 / DC3000) protein is Bis(5'-nucleosyl)-tetraphosphatase, symmetrical.